Consider the following 629-residue polypeptide: tRNA uridine 5-carboxymethylaminomethyl modification enzyme MnmG (629 aa).

Residues 14–19 (GAGHAG), V126, and S181 contribute to the FAD site. 273–287 (GPRYCPSIEDKVVRF) lines the NAD(+) pocket. Q370 serves as a coordination point for FAD.

It belongs to the MnmG family. Homodimer. Heterotetramer of two MnmE and two MnmG subunits. FAD serves as cofactor.

Its subcellular location is the cytoplasm. In terms of biological role, NAD-binding protein involved in the addition of a carboxymethylaminomethyl (cmnm) group at the wobble position (U34) of certain tRNAs, forming tRNA-cmnm(5)s(2)U34. The protein is tRNA uridine 5-carboxymethylaminomethyl modification enzyme MnmG of Bacillus thuringiensis (strain Al Hakam).